A 119-amino-acid chain; its full sequence is Protein ELF4-LIKE 2 (119 aa).

Residues 91–119 (SVDASSEGESTGTLKSDGKANNQKRFRSG) form a disordered region. Positions 93–111 (DASSEGESTGTLKSDGKAN) are enriched in polar residues.

It belongs to the EARLY FLOWERING 4 family. As to quaternary structure, homodimer.

The protein resides in the nucleus. In terms of biological role, component of the central CCA1/LHY-TOC1 feedback loop in the circadian clock that promotes clock accuracy and is required for sustained rhythms in the absence of daily light/dark cycles. The sequence is that of Protein ELF4-LIKE 2 (EFL2) from Arabidopsis thaliana (Mouse-ear cress).